Here is a 490-residue protein sequence, read N- to C-terminus: Beta-1,3-glucan-binding protein 1 (490 aa).

Residues 1–19 (MYKQTVVIFLLCFFICVSC) form the signal peptide. In terms of domain architecture, CBM39 spans 20–119 (YEVPPAKLEA…GEWTVTGYVD (100 aa)). Residues 152 to 490 (PPTSQNTYPC…QVDYVRVYAL (339 aa)) form the GH16 domain. An N-linked (GlcNAc...) asparagine glycan is attached at asparagine 372.

Belongs to the insect beta-1,3-glucan binding protein family. In terms of assembly, monomer. In terms of tissue distribution, hemolymph.

The protein localises to the secreted. In terms of biological role, plays a role in the recognition of invading microorganisms activating the phenoloxidase cascade. Binds specifically to beta-1,3-glucan. Binds the Aspergillus niger cell wall component alpha-1,3-glucan, a fungal pathogen-associated molecular pattern (PAMP) that activates the host immune response. The chain is Beta-1,3-glucan-binding protein 1 from Galleria mellonella (Greater wax moth).